Here is a 248-residue protein sequence, read N- to C-terminus: Myelin protein P0 (248 aa).

An N-terminal signal peptide occupies residues M1–Q28. The Extracellular portion of the chain corresponds to A29–G155. Residues I30–T143 enclose the Ig-like V-type domain. An intrachain disulfide couples C50 to C127. N-linked (GlcNAc...) (complex) asparagine glycosylation occurs at N122. Residues V156–F176 traverse the membrane as a helical segment. Topologically, residues Y177 to K248 are cytoplasmic. At S210 the chain carries Phosphoserine; by PKC. Positions D224 to K248 are disordered. Residues S226 and S228 each carry the phosphoserine modification. 2 positions are modified to phosphoserine; by PKC: S233 and S243.

This sequence belongs to the myelin P0 protein family. In terms of assembly, homodimer and homotetramer. N-glycosylated; contains sulfate-substituted glycan. As to expression, found only in peripheral nervous system Schwann cells.

It localises to the cell membrane. Functionally, is an adhesion molecule necessary for normal myelination in the peripheral nervous system. It mediates adhesion between adjacent myelin wraps and ultimately drives myelin compaction. The sequence is that of Myelin protein P0 (MPZ) from Bos taurus (Bovine).